The following is a 1401-amino-acid chain: Condensin complex subunit 1 (1401 aa).

Positions 1-603 (MAPQMYEFHL…TVCKNKPNMS (603 aa)) are interactions with SMC2 and SMC4. Residues Ser-20 and Ser-585 each carry the phosphoserine modification. Over residues 576–596 (STQEKNPRESTGNMVTGQTVC) the composition is skewed to polar residues. Disordered stretches follow at residues 576–611 (STQE…SRGN), 956–978 (REEQ…TTME), and 1303–1401 (LEIG…RHRS). Residues 956-971 (REEQEHKTKDPKEKNT) show a composition bias toward basic and acidic residues. Positions 1308 to 1336 (AGSQRAPSAKKPSTGSRYQPLASTASDND) are enriched in polar residues. A phosphoserine mark is found at Ser-1310, Ser-1315, and Ser-1330. Thr-1331 carries the phosphothreonine modification. The residue at position 1333 (Ser-1333) is a Phosphoserine. Thr-1339 carries the phosphothreonine modification. Residues 1342 to 1362 (PRRTTRRHPNTQQRASKKKPK) carry the Bipartite nuclear localization signal motif. A compositionally biased stretch (basic residues) spans 1345–1362 (TTRRHPNTQQRASKKKPK). Phosphoserine is present on residues Ser-1366, Ser-1367, Ser-1370, Ser-1371, and Ser-1376. Over residues 1369–1382 (ESSEEDLSAEMTED) the composition is skewed to acidic residues. 2 positions are modified to phosphothreonine; by CDK1: Thr-1384 and Thr-1389. Ser-1395 bears the Phosphoserine mark.

This sequence belongs to the CND1 (condensin subunit 1) family. As to quaternary structure, component of the condensin complex, which contains the SMC2 and SMC4 heterodimer, and three non SMC subunits that probably regulate the complex: NCAPH/BRRN1, NCAPD2/CAPD2 and NCAPG. Interacts with histones H1 and H3. Post-translationally, phosphorylated by CDK1. Its phosphorylation, as well as that of NCAPH and NCAPG subunits, activates the condensin complex and is required for chromosome condensation.

It is found in the nucleus. The protein resides in the cytoplasm. The protein localises to the chromosome. Regulatory subunit of the condensin complex, a complex required for conversion of interphase chromatin into mitotic-like condense chromosomes. The condensin complex probably introduces positive supercoils into relaxed DNA in the presence of type I topoisomerases and converts nicked DNA into positive knotted forms in the presence of type II topoisomerases. May target the condensin complex to DNA via its C-terminal domain. May promote the resolution of double-strand DNA catenanes (intertwines) between sister chromatids. Condensin-mediated compaction likely increases tension in catenated sister chromatids, providing directionality for type II topoisomerase-mediated strand exchanges toward chromatid decatenation. Required for decatenation of non-centromeric ultrafine DNA bridges during anaphase. Early in neurogenesis, may play an essential role to ensure accurate mitotic chromosome condensation in neuron stem cells, ultimately affecting neuron pool and cortex size. This chain is Condensin complex subunit 1, found in Homo sapiens (Human).